A 382-amino-acid chain; its full sequence is Carbamoyl phosphate synthase small chain (382 aa).

Residues 1 to 189 (MIKSALLVLE…GLPEAKKEDE (189 aa)) are CPSase. S47, G241, and G243 together coordinate L-glutamine. One can recognise a Glutamine amidotransferase type-1 domain in the interval 193–380 (HVVAYDFGAK…IALIEQYRKT (188 aa)). C269 acts as the Nucleophile in catalysis. L-glutamine-binding residues include L270, Q273, N311, G313, and F314. Active-site residues include H353 and E355.

This sequence belongs to the CarA family. As to quaternary structure, composed of two chains; the small (or glutamine) chain promotes the hydrolysis of glutamine to ammonia, which is used by the large (or ammonia) chain to synthesize carbamoyl phosphate. Tetramer of heterodimers (alpha,beta)4.

The catalysed reaction is hydrogencarbonate + L-glutamine + 2 ATP + H2O = carbamoyl phosphate + L-glutamate + 2 ADP + phosphate + 2 H(+). It catalyses the reaction L-glutamine + H2O = L-glutamate + NH4(+). The protein operates within amino-acid biosynthesis; L-arginine biosynthesis; carbamoyl phosphate from bicarbonate: step 1/1. It functions in the pathway pyrimidine metabolism; UMP biosynthesis via de novo pathway; (S)-dihydroorotate from bicarbonate: step 1/3. Its function is as follows. Small subunit of the glutamine-dependent carbamoyl phosphate synthetase (CPSase). CPSase catalyzes the formation of carbamoyl phosphate from the ammonia moiety of glutamine, carbonate, and phosphate donated by ATP, constituting the first step of 2 biosynthetic pathways, one leading to arginine and/or urea and the other to pyrimidine nucleotides. The small subunit (glutamine amidotransferase) binds and cleaves glutamine to supply the large subunit with the substrate ammonia. The sequence is that of Carbamoyl phosphate synthase small chain from Escherichia coli O6:H1 (strain CFT073 / ATCC 700928 / UPEC).